A 102-amino-acid polypeptide reads, in one-letter code: Small ribosomal subunit protein uS10 (102 aa).

It belongs to the universal ribosomal protein uS10 family. Part of the 30S ribosomal subunit.

Functionally, involved in the binding of tRNA to the ribosomes. This chain is Small ribosomal subunit protein uS10, found in Roseiflexus sp. (strain RS-1).